The sequence spans 300 residues: Vetispiradiene synthase 2 (300 aa).

Mg(2+) is bound by residues Asp54, Asp58, Asp197, Thr201, and Glu205. The short motif at Asp54–Asp58 is the DDXXD motif element.

It belongs to the terpene synthase family. Tpsa subfamily. Mg(2+) serves as cofactor.

The protein localises to the cytoplasm. It carries out the reaction (2E,6E)-farnesyl diphosphate = (-)-vetispiradiene + diphosphate. Its pathway is secondary metabolite biosynthesis; terpenoid biosynthesis. Functionally, sesquiterpene synthase that catalyzes the formation of vetispiradiene from trans,trans-farnesyl diphosphate. The initial internal cyclization produces the monocyclic intermediate germacrene A. The chain is Vetispiradiene synthase 2 from Hyoscyamus muticus (Egyptian henbane).